We begin with the raw amino-acid sequence, 232 residues long: 5'-methylthioadenosine/S-adenosylhomocysteine nucleosidase (232 aa).

Glutamate 12 acts as the Proton acceptor in catalysis. Substrate is bound by residues glycine 78, isoleucine 152, and 173–174 (ME). Aspartate 197 functions as the Proton donor in the catalytic mechanism.

Belongs to the PNP/UDP phosphorylase family. MtnN subfamily. As to quaternary structure, homodimer.

The catalysed reaction is S-adenosyl-L-homocysteine + H2O = S-(5-deoxy-D-ribos-5-yl)-L-homocysteine + adenine. The enzyme catalyses S-methyl-5'-thioadenosine + H2O = 5-(methylsulfanyl)-D-ribose + adenine. It carries out the reaction 5'-deoxyadenosine + H2O = 5-deoxy-D-ribose + adenine. It participates in amino-acid biosynthesis; L-methionine biosynthesis via salvage pathway; S-methyl-5-thio-alpha-D-ribose 1-phosphate from S-methyl-5'-thioadenosine (hydrolase route): step 1/2. Catalyzes the irreversible cleavage of the glycosidic bond in both 5'-methylthioadenosine (MTA) and S-adenosylhomocysteine (SAH/AdoHcy) to adenine and the corresponding thioribose, 5'-methylthioribose and S-ribosylhomocysteine, respectively. Also cleaves 5'-deoxyadenosine, a toxic by-product of radical S-adenosylmethionine (SAM) enzymes, into 5-deoxyribose and adenine. Thus, is required for in vivo function of the radical SAM enzymes biotin synthase and lipoic acid synthase, that are inhibited by 5'-deoxyadenosine accumulation. The chain is 5'-methylthioadenosine/S-adenosylhomocysteine nucleosidase from Klebsiella pneumoniae subsp. pneumoniae (strain ATCC 700721 / MGH 78578).